The sequence spans 324 residues: Phospho-N-acetylmuramoyl-pentapeptide-transferase (324 aa).

Transmembrane regions (helical) follow at residues 13–33 (VLSA…IFIP), 59–79 (PTMG…IIGY), 85–105 (GMVV…DDIL), 121–141 (MILL…NIGT), 143–163 (IIIP…PLVV), 179–199 (IDGL…IVGF), 201–221 (TGHY…LGFL), 243–263 (AIAT…VGGI), and 303–323 (VKLV…GFIA).

Belongs to the glycosyltransferase 4 family. MraY subfamily. The cofactor is Mg(2+).

It localises to the cell membrane. It catalyses the reaction UDP-N-acetyl-alpha-D-muramoyl-L-alanyl-gamma-D-glutamyl-meso-2,6-diaminopimeloyl-D-alanyl-D-alanine + di-trans,octa-cis-undecaprenyl phosphate = di-trans,octa-cis-undecaprenyl diphospho-N-acetyl-alpha-D-muramoyl-L-alanyl-D-glutamyl-meso-2,6-diaminopimeloyl-D-alanyl-D-alanine + UMP. The protein operates within cell wall biogenesis; peptidoglycan biosynthesis. Functionally, catalyzes the initial step of the lipid cycle reactions in the biosynthesis of the cell wall peptidoglycan: transfers peptidoglycan precursor phospho-MurNAc-pentapeptide from UDP-MurNAc-pentapeptide onto the lipid carrier undecaprenyl phosphate, yielding undecaprenyl-pyrophosphoryl-MurNAc-pentapeptide, known as lipid I. This Clostridium botulinum (strain Alaska E43 / Type E3) protein is Phospho-N-acetylmuramoyl-pentapeptide-transferase.